Reading from the N-terminus, the 478-residue chain is Phenylalanine--tRNA ligase alpha subunit (478 aa).

L-phenylalanine is bound by residues T318, 357–359, and Y397; that span reads QLE. E399 is a binding site for Mg(2+). Position 422 (F422) interacts with L-phenylalanine.

This sequence belongs to the class-II aminoacyl-tRNA synthetase family. Phe-tRNA synthetase alpha subunit type 2 subfamily. In terms of assembly, tetramer of two alpha and two beta subunits. It depends on Mg(2+) as a cofactor.

Its subcellular location is the cytoplasm. The enzyme catalyses tRNA(Phe) + L-phenylalanine + ATP = L-phenylalanyl-tRNA(Phe) + AMP + diphosphate + H(+). The sequence is that of Phenylalanine--tRNA ligase alpha subunit from Methanospirillum hungatei JF-1 (strain ATCC 27890 / DSM 864 / NBRC 100397 / JF-1).